A 717-amino-acid chain; its full sequence is DNA ligase (717 aa).

NAD(+)-binding positions include 41 to 45, 90 to 91, and Glu-124; these read DARYD and SL. Lys-126 serves as the catalytic N6-AMP-lysine intermediate. NAD(+) is bound by residues Arg-147, Glu-183, Lys-299, and Lys-323. The Zn(2+) site is built by Cys-428, Cys-431, Cys-446, and Cys-452. The BRCT domain maps to 636–717; that stretch reads ADYSPVAGKT…WLQLINEHHI (82 aa).

The protein belongs to the NAD-dependent DNA ligase family. LigA subfamily. It depends on Mg(2+) as a cofactor. Mn(2+) is required as a cofactor.

The enzyme catalyses NAD(+) + (deoxyribonucleotide)n-3'-hydroxyl + 5'-phospho-(deoxyribonucleotide)m = (deoxyribonucleotide)n+m + AMP + beta-nicotinamide D-nucleotide.. Its function is as follows. DNA ligase that catalyzes the formation of phosphodiester linkages between 5'-phosphoryl and 3'-hydroxyl groups in double-stranded DNA using NAD as a coenzyme and as the energy source for the reaction. It is essential for DNA replication and repair of damaged DNA. The sequence is that of DNA ligase from Bartonella bacilliformis (strain ATCC 35685 / KC583 / Herrer 020/F12,63).